Consider the following 310-residue polypeptide: Thioesterase pytI (310 aa).

2 consecutive transmembrane segments (helical) span residues 14–34 and 95–115; these read SLTP…YFAL and LLGG…IFVA. A disordered region spans residues 168–195; the sequence is TLSDDASTTTSSDNSRASTDHGADSEVE. The span at 170–184 shows a compositional bias: low complexity; it reads SDDASTTTSSDNSRA.

The protein belongs to the AMT4 thioesterase family.

The protein resides in the membrane. It functions in the pathway secondary metabolite biosynthesis. Its function is as follows. Thioesterase; part of the gene cluster that mediates the biosynthesis of pyranterreones, a family of antioxidative compounds. The first step of pyranonigrins biosynthesis is performed by the hybrid PKS-NRPS synthetase pytA that condenses 4 malonyl-CoA units ato the acetyl starter unit by the modular PKS of pytA. The acyl chain is then connected to an L-serine through the amide bond by the modular NRPS of pytA. A tetramic acid is formed and released from the PKS-NRPS pytA to give pyranterreone 5 with the help of the thioesterase pytI. Pyranterreone 5 could be methylated by pytC to afford pyranterreone 6. Both pyranterreones 5 and 6 are subsequently oxidized by the FAD-linked oxidoreductase pytB and the cytochrome P450 monooxygenase pytD to form the fused gamma-pyrone core, resulting in pyranterreones 7 and 11, respectively. The hydroxy group at C-8 of pyranterreones 7 and 11 are dehydrated by the aspartyl protease pytH to form a delta-7 double bond to give pyranterreones 3 and 1, 2 accordingly. The exo-methylene of pyranterreone 3 could be reduced into a pendant methyl by reductase pytE to provide pyranterreone 4, also known as cordylactam. Pyranterreone 4 can be reconverted to pyranterreone 3 through pytB-catalyzed dehydrogenation or further oxidized to pyranterreones 9 and 10. This chain is Thioesterase pytI, found in Aspergillus terreus.